The following is a 205-amino-acid chain: Outer-membrane lipoprotein carrier protein (205 aa).

The first 21 residues, 1–21, serve as a signal peptide directing secretion; sequence MKKIVLLVTLVFSINYSFANA.

Belongs to the LolA family. Monomer.

The protein resides in the periplasm. Participates in the translocation of lipoproteins from the inner membrane to the outer membrane. Only forms a complex with a lipoprotein if the residue after the N-terminal Cys is not an aspartate (The Asp acts as a targeting signal to indicate that the lipoprotein should stay in the inner membrane). This is Outer-membrane lipoprotein carrier protein from Francisella philomiragia subsp. philomiragia (strain ATCC 25017 / CCUG 19701 / FSC 153 / O#319-036).